Reading from the N-terminus, the 386-residue chain is D-galactosamine-6-phosphate deaminase AgaS (386 aa).

SIS domains follow at residues 59-217 and 222-366; these read LTPI…CIEM and LTER…PDNP.

Belongs to the SIS family. AgaS subfamily.

The protein resides in the cytoplasm. The catalysed reaction is D-galactosamine 6-phosphate + H2O = D-tagatopyranose 1-phosphate + NH4(+). It catalyses the reaction alpha-D-glucosamine 6-phosphate + H2O = beta-D-fructose 6-phosphate + NH4(+). Involved in the pathway of N-acetyl-D-galactosamine degradation. Catalyzes the conversion of D-galactosamine 6-phosphate (GalN-6-P) to D-tagatofuranose 6-phosphate (Tag-6-P). It can also catalyze the conversion of D-glucosamine 6-phosphate. This is D-galactosamine-6-phosphate deaminase AgaS from Shewanella sp. (strain ANA-3).